Here is a 316-residue protein sequence, read N- to C-terminus: D-alanine--D-alanine ligase (316 aa).

Residues 108–310 (ERYEELSVVK…FDELVDLIIK (203 aa)) enclose the ATP-grasp domain. Residue 138-193 (EEKIGLPCVVKPRKEGSSIGTHICFSKEELLDALKNEFKNYDEMIVQEYIKGKEIT) coordinates ATP. Residues Asp265, Glu277, and Asn279 each contribute to the Mg(2+) site.

It belongs to the D-alanine--D-alanine ligase family. Mg(2+) is required as a cofactor. Mn(2+) serves as cofactor.

It is found in the cytoplasm. The catalysed reaction is 2 D-alanine + ATP = D-alanyl-D-alanine + ADP + phosphate + H(+). It functions in the pathway cell wall biogenesis; peptidoglycan biosynthesis. Its function is as follows. Cell wall formation. The protein is D-alanine--D-alanine ligase of Fervidobacterium nodosum (strain ATCC 35602 / DSM 5306 / Rt17-B1).